The sequence spans 327 residues: G protein pathway suppressor 2 (327 aa).

A coiled-coil region spans residues 14-109 (MARALHRHIM…RRRKEQSDLT (96 aa)). Residues 26–65 (RERKRQEEEEVDKMMEQKMKEEQERRKKKEMEERMSLEET) form a disordered region. Glycyl lysine isopeptide (Lys-Gly) (interchain with G-Cter in SUMO1) cross-links involve residues K45 and K71. An interaction with SUMO region spans residues 61-94 (SLEETKEQILKLEEKLLALQEEKHQLFLQLKKVL). Disordered regions lie at residues 177–208 (HGQFQGSPGGAYGTAQPPPHYGPTQPAYSPSQ) and 253–327 (QKQM…FYHK). Over residues 253–271 (QKQMEHANQQTGFSDSSSL) the composition is skewed to polar residues. R312 is subject to Asymmetric dimethylarginine. The span at 317 to 327 (QHSQNPRFYHK) shows a compositional bias: polar residues. At R323 the chain carries Asymmetric dimethylarginine; alternate. Position 323 is an omega-N-methylarginine; alternate (R323).

In terms of assembly, component of the N-Cor repressor complex, at least composed of NCOR1, NCOR2, HDAC3, TBL1X, TBL1R, CORO2A and GPS2. Interacts (when sumoylated at Lys-71) with TBL1X; leading to protect GPS2 from degradation by the proteasome. Interacts with UBE2N; leading to inhibit UBE2N/Ubc13 activity. Interacts with TRAF1. Interacts with TRAF2. Interacts with TRAF6. Interacts with PPARG (when in the liganded conformation). Interacts with (sumoylated) NR1H2; interaction with sumoylated NR1H2 and NR5A2 onto hepatic acute phase protein promoters prevents N-Cor corepressor complex dissociation. Interacts with (sumoylated) NR5A2; interaction with sumoylated NR1H2 and NR5A2 onto hepatic acute phase protein promoters prevents N-Cor corepressor complex dissociation. Interacts with NR1H3. Interacts with RFX4. Interacts with ANKRD26. As to quaternary structure, (Microbial infection) Interacts (via coiled coil domain) with hepatitis C virus (HCV) NS5A. Post-translationally, sumoylation regulates its subcellular location. Sumoylation at Lys-45 and Lys-71 regulates the shuttling between the cytoplasm and the nucleus. Sumoylation at Lys-71 is required for interaction with TBL1X. Sumoylated at Lys-45 and Lys-71 in mitochondrion. Desumoylation by SENP1 leads to relocation from the mitochondria to the nucleus. In terms of processing, ubiquitinated at the C-terminus by SIAH2; leading to its degradation by the proteasome. Interaction with TBL1X and methylation at Arg-323 protect GPS2 against ubiquitination and degradation. Methylated at Arg-312 and Arg-323 by PRMT6. Methylation at Arg-323 protects from degradation by the proteasome. Widely expressed.

It is found in the nucleus. The protein resides in the mitochondrion. The protein localises to the cytoplasm. It localises to the cytosol. Its function is as follows. Key regulator of inflammation, lipid metabolism and mitochondrion homeostasis that acts by inhibiting the activity of the ubiquitin-conjugating enzyme UBE2N/Ubc13, thereby inhibiting 'Lys-63'-linked ubiquitination. In the nucleus, can both acts as a corepressor and coactivator of transcription, depending on the context. Acts as a transcription coactivator in adipocytes by promoting the recruitment of PPARG to promoters: acts by inhibiting the activity of the ubiquitin-conjugating enzyme UBE2N/Ubc13, leading to stabilization of KDM4A and subsequent histone H3 'Lys-9' (H3K9) demethylation. Promotes cholesterol efflux by acting as a transcription coactivator. Acts as a regulator of B-cell development by inhibiting UBE2N/Ubc13, thereby restricting the activation of Toll-like receptors (TLRs) and B-cell antigen receptors (BCRs) signaling pathways. Acts as a key mediator of mitochondrial stress response: in response to mitochondrial depolarization, relocates from the mitochondria to the nucleus following desumoylation and specifically promotes expression of nuclear-encoded mitochondrial genes. Promotes transcription of nuclear-encoded mitochondrial genes by inhibiting UBE2N/Ubc13. Can also act as a corepressor as part of the N-Cor repressor complex by repressing active PPARG. Plays an anti-inflammatory role in macrophages and is required for insulin sensitivity by acting as a corepressor. Plays an anti-inflammatory role during the hepatic acute phase response by interacting with sumoylated NR1H2 and NR5A2 proteins, thereby preventing N-Cor corepressor complex dissociation. In the cytosol, also plays a non-transcriptional role by regulating insulin signaling and pro-inflammatory pathways. In the cytoplasm, acts as a negative regulator of inflammation by inhibiting the pro-inflammatory TNF-alpha pathway; acts by repressing UBE2N/Ubc13 activity. In the cytoplasm of adipocytes, restricts the activation of insulin signaling via inhibition of UBE2N/Ubc13-mediated ubiquitination of AKT. Able to suppress G-protein- and mitogen-activated protein kinase-mediated signal transduction. Acts as a tumor-suppressor in liposarcoma. Functionally, (Microbial infection) Required for efficient replication of hepatitis C virus (HCV) by promoting the interaction between VAPA and HCV virus protein NS5A. This chain is G protein pathway suppressor 2, found in Homo sapiens (Human).